The sequence spans 182 residues: Isopentenyl-diphosphate Delta-isomerase (182 aa).

Residues His25 and His32 each coordinate Mn(2+). Positions 30 to 164 constitute a Nudix hydrolase domain; sequence LLHLAFSSWL…PWAFSPWMVM (135 aa). Cys67 is a catalytic residue. Cys67 provides a ligand contact to Mg(2+). A Mn(2+)-binding site is contributed by His69. Glu87 serves as a coordination point for Mg(2+). Residues Glu114 and Glu116 each coordinate Mn(2+). Glu116 is a catalytic residue.

Belongs to the IPP isomerase type 1 family. As to quaternary structure, homodimer. It depends on Mg(2+) as a cofactor. Mn(2+) serves as cofactor.

The protein resides in the cytoplasm. The catalysed reaction is isopentenyl diphosphate = dimethylallyl diphosphate. It participates in isoprenoid biosynthesis; dimethylallyl diphosphate biosynthesis; dimethylallyl diphosphate from isopentenyl diphosphate: step 1/1. Its function is as follows. Catalyzes the 1,3-allylic rearrangement of the homoallylic substrate isopentenyl (IPP) to its highly electrophilic allylic isomer, dimethylallyl diphosphate (DMAPP). The chain is Isopentenyl-diphosphate Delta-isomerase from Shigella boydii serotype 4 (strain Sb227).